Reading from the N-terminus, the 84-residue chain is U21-theraphotoxin-Cg1c (84 aa).

Positions 1–21 (MKVSVLITLAVLGVMFLLTSA) are cleaved as a signal peptide. The propeptide occupies 22-47 (EERGSDQMDSPAWLKSMERIFQSEER). 3 disulfide bridges follow: C49–C63, C56–C68, and C62–C76.

Belongs to the neurotoxin 10 (Hwtx-1) family. 05 (F4a) subfamily. Expressed by the venom gland.

It localises to the secreted. In terms of biological role, probable ion channel inhibitor. The chain is U21-theraphotoxin-Cg1c from Chilobrachys guangxiensis (Chinese earth tiger tarantula).